Reading from the N-terminus, the 350-residue chain is MAFKLASSPHLSTKAQTRGLMFKVMLCALPGALAQCYFFGWGTLIQIALAIAIAVATEAAVLKLRARPVGKTIRDNSAALTGLLIGVAIPALAPWWIAAIGVIFAILVVKQLYGGLGNNIFNPAMAAYVMLLISFPMQMTTWVAPSGAALHDLGLMQSLSVIFQGADAEQVLAYRAGIDGVTMATPLDAVKTGLSTGLTLDEILTKASFSDGFGIGWALINLAYLAGGLVMLKLKLIRWQISTAILASLFVCASIGYLLSPDTHMGPLLHLFSGATMLAAFFIATDPVTAATSTRGRLIFGSLIGLLVYLIRSFCGYPDAFAFAVLLANLCAPFIDYYVKPRAYGHRASR.

Transmembrane regions (helical) follow at residues 36-56 (CYFF…IAVA), 89-109 (IPAL…ILVV), and 124-144 (AMAA…TWVA). At T185 the chain carries FMN phosphoryl threonine. The next 5 membrane-spanning stretches (helical) occupy residues 212 to 232 (GFGI…LVML), 239 to 259 (WQIS…GYLL), 265 to 285 (MGPL…FIAT), 298 to 318 (LIFG…CGYP), and 319 to 339 (DAFA…DYYV).

It belongs to the NqrB/RnfD family. In terms of assembly, the complex is composed of six subunits: RnfA, RnfB, RnfC, RnfD, RnfE and RnfG. FMN is required as a cofactor.

It is found in the cell inner membrane. Its function is as follows. Part of a membrane-bound complex that couples electron transfer with translocation of ions across the membrane. The sequence is that of Ion-translocating oxidoreductase complex subunit D from Shewanella loihica (strain ATCC BAA-1088 / PV-4).